The sequence spans 41 residues: Large ribosomal subunit protein bL36 (41 aa).

It belongs to the bacterial ribosomal protein bL36 family.

This chain is Large ribosomal subunit protein bL36, found in Beijerinckia indica subsp. indica (strain ATCC 9039 / DSM 1715 / NCIMB 8712).